Reading from the N-terminus, the 147-residue chain is Hemoglobin subunit gamma (147 aa).

In terms of domain architecture, Globin spans 3 to 147; the sequence is HFTAEEKAAI…VATALAHKYH (145 aa). Histidine 64 and histidine 93 together coordinate heme b.

This sequence belongs to the globin family. In terms of assembly, heterotetramer of two alpha chains and two gamma chains. In terms of tissue distribution, red blood cells.

This protein functions as an embryonic globin, but the gene structure and chromosomal location resemble more closely the human gamma chain gene, which codes for a fetal globin. The polypeptide is Hemoglobin subunit gamma (HBG) (Oryctolagus cuniculus (Rabbit)).